The sequence spans 126 residues: C-type natriuretic peptide (126 aa).

Positions 1–23 (MHLSQLIACALLLALLSLRPSEA) are cleaved as a signal peptide. Residues 20-73 (PSEAKPGTPPKVPRTPPGEELADSQAAGGNQKKGDKTPGSGGANLKGDRSRLLR) form a disordered region. Residues 24-73 (KPGTPPKVPRTPPGEELADSQAAGGNQKKGDKTPGSGGANLKGDRSRLLR) constitute a propeptide that is removed on maturation. Pro residues predominate over residues 26–35 (GTPPKVPRTP). C110 and C126 are disulfide-bonded.

This sequence belongs to the natriuretic peptide family. Post-translationally, degraded by IDE (in vitro).

It is found in the secreted. Its function is as follows. Hormone which plays a role in endochondral ossification through regulation of cartilaginous growth plate chondrocytes proliferation and differentiation. May also be vasoactive and natriuretic. Acts by specifically binding and stimulating NPR2 to produce cGMP. Binds the clearance receptor NPR3. In Mus musculus (Mouse), this protein is C-type natriuretic peptide (Nppc).